A 218-amino-acid chain; its full sequence is UPF0598 protein C8orf82 homolog (218 aa).

The protein belongs to the UPF0598 family.

In Bos taurus (Bovine), this protein is UPF0598 protein C8orf82 homolog.